The primary structure comprises 1242 residues: Insulin receptor substrate 1 (1242 aa).

Residue S3 is modified to Phosphoserine. Positions 3–137 are mediates interaction with PHIP; it reads SPPESDGFSD…GAGGGGGSCS (135 aa). In terms of domain architecture, PH spans 12-115; the sequence is DVRKVGYLRK…WYQALLQLHN (104 aa). S99 carries the phosphoserine; by CK2 modification. The IRS-type PTB domain maps to 160–264; it reads FKEVWQVILK…EAMRAMSDEF (105 aa). The segment at 262-430 is disordered; it reads DEFRPRSKSQ…SDGGFISSDE (169 aa). Positions 269-281 are enriched in low complexity; sequence KSQSSSNCSNPIS. Phosphoserine; by RPS6KB1 occurs at positions 270 and 307. S312 carries the phosphoserine; by IKKB, MAPK8 and RPS6KB1 modification. Phosphoserine occurs at positions 315, 323, 330, 345, and 348. The span at 354–363 shows a compositional bias: basic residues; sequence THAHRHRGSA. 2 stretches are compositionally biased toward low complexity: residues 383-404 and 412-424; these read SPSA…GSTS and SSAS…SDGG. S419 is modified (phosphoserine). T446 and T453 each carry phosphothreonine. Y465 bears the Phosphotyrosine; by INSR mark. The YXXM motif 1 signature appears at 465 to 468; that stretch reads YICM. The residue at position 527 (S527) is a Phosphoserine; by RPS6KB1. Residues 551 to 554 carry the YXXM motif 2 motif; sequence YTEM. Positions 592-610 are enriched in basic and acidic residues; sequence LERRGGHHRPDSSTLHTDD. The interval 592–616 is disordered; the sequence is LERRGGHHRPDSSTLHTDDGYMPMS. Y612 is modified (phosphotyrosine; by INSR). The short motif at 612 to 615 is the YXXM motif 3 element; sequence YMPM. 2 positions are modified to phosphoserine: S616 and S629. Y632 is subject to Phosphotyrosine; by INSR. A YXXM motif 4 motif is present at residues 632–635; sequence YMPM. S636 is subject to Phosphoserine; by RPS6KB1. A Phosphotyrosine modification is found at Y662. Residues 662 to 665 carry the YXXM motif 5 motif; that stretch reads YMMM. The interval 668–693 is disordered; it reads SGGCSPDIGGGPSSSSSSSNAVPSGT. The short motif at 732-735 is the YXXM motif 6 element; sequence YMNM. Disordered regions lie at residues 771 to 900 and 918 to 937; these read FKHT…VNIE and SPSV…EETG. Over residues 776-785 the composition is skewed to basic and acidic residues; it reads RPGEPEEGAR. S794 carries the phosphoserine; by AMPK and SIK2 modification. Over residues 801–815 the composition is skewed to low complexity; that stretch reads AATADDSSSSTSSDS. S892 carries the phosphoserine modification. Y896 carries the phosphotyrosine; by INSR modification. The tract at residues 896-898 is GRB2-binding; that stretch reads YVN. Over residues 918–928 the composition is skewed to polar residues; the sequence is SPSVRCPSQLQ. 2 positions are modified to phosphotyrosine; by INSR: Y941 and Y989. 3 short sequence motifs (YXXM motif) span residues 941–944, 989–992, and 1012–1015; these read YMKM, YMTM, and YADM. The interval 1057 to 1146 is disordered; sequence SSLLGGPQGP…DVKRHSSASF (90 aa). Polar residues predominate over residues 1073–1085; that stretch reads TRVNLSPNRNQSA. S1100 bears the Phosphoserine mark. A Phosphoserine; by RPS6KB1 and PKC/PRKCQ modification is found at S1101. Over residues 1102–1114 the composition is skewed to polar residues; it reads ETFSSTPSATRVG. At Y1179 the chain carries Phosphotyrosine; by INSR. Glycyl lysine isopeptide (Lys-Gly) (interchain with G-Cter in ubiquitin) cross-links involve residues K1186 and K1189. The segment at 1190–1242 is disordered; that stretch reads QCPQECTPEPQPPPPPPPHQPLGSGESSSTRRSSEDLSAYASISFQKQPEDRQ. Residues 1198 to 1209 show a composition bias toward pro residues; the sequence is EPQPPPPPPPHQ. The span at 1210-1220 shows a compositional bias: low complexity; it reads PLGSGESSSTR. Residue Y1229 is modified to Phosphotyrosine; by INSR.

In terms of assembly, interacts with UBTF and PIK3CA. Interacts (via phosphorylated YXXM motifs) with PIK3R1. Interacts with ROCK1 and FER. Interacts (via PH domain) with PHIP. Interacts with GRB2. Interacts with SOCS7. Interacts (via IRS-type PTB domain) with IGF1R and INSR (via the tyrosine-phosphorylated NPXY motif). Interacts with ALK. Interacts with EIF2AK2/PKR. Interacts with GKAP1. Interacts with DGKZ in the absence of insulin; insulin stimulation decreases this interaction. Found in a ternary complex with DGKZ and PIP5K1A in the absence of insulin stimulation. Interacts with SQSTM1; the interaction is disrupted by the presence of tensin TNS2. Interacts with NCK1 (via SH2 domain). Interacts with NCK2 (via SH3 domain). Interacts with SH2B1; this interaction enhances leptin-induced activation of the PI3-kinase pathway. Interacts with DVL2; this interaction promotes the Wnt/beta-catenin signaling pathway. Serine phosphorylation of IRS1 is a mechanism for insulin resistance. Ser-307, Ser-312, Ser-315, and Ser-323 phosphorylations inhibit insulin action through disruption of IRS1 interaction with the insulin receptor INSR. Phosphorylation of Tyr-896 is required for GRB2-binding. Phosphorylated by ALK. Phosphorylated at Ser-270, Ser-307, Ser-636 and Ser-1101 by RPS6KB1; phosphorylation induces accelerated degradation of IRS1. Phosphorylated on tyrosine residues in response to insulin. In skeletal muscles, dephosphorylated on Tyr-612 by TNS2 under anabolic conditions; dephosphorylation results in the proteasomal degradation of IRS1. In terms of processing, ubiquitinated by the Cul7-RING(FBXW8) complex in a mTOR-dependent manner, leading to its degradation: the Cul7-RING(FBXW8) complex recognizes and binds IRS1 previously phosphorylated by S6 kinase (RPS6KB1 or RPS6KB2). Ubiquitinated by TRAF4 through 'Lys-29' linkage; this ubiquitination regulates the interaction of IRS1 with IGFR and IRS1 tyrosine phosphorylation upon IGF1 stimulation. Post-translationally, S-nitrosylation at by BLVRB inhibits its activity.

The protein localises to the cytoplasm. It localises to the nucleus. In terms of biological role, signaling adapter protein that participates in the signal transduction from two prominent receptor tyrosine kinases, insulin receptor/INSR and insulin-like growth factor I receptor/IGF1R. Plays therefore an important role in development, growth, glucose homeostasis as well as lipid metabolism. Upon phosphorylation by the insulin receptor, functions as a signaling scaffold that propagates insulin action through binding to SH2 domain-containing proteins including the p85 regulatory subunit of PI3K, NCK1, NCK2, GRB2 or SHP2. Recruitment of GRB2 leads to the activation of the guanine nucleotide exchange factor SOS1 which in turn triggers the Ras/Raf/MEK/MAPK signaling cascade. Activation of the PI3K/AKT pathway is responsible for most of insulin metabolic effects in the cell, and the Ras/Raf/MEK/MAPK is involved in the regulation of gene expression and in cooperation with the PI3K pathway regulates cell growth and differentiation. Acts a positive regulator of the Wnt/beta-catenin signaling pathway through suppression of DVL2 autophagy-mediated degradation leading to cell proliferation. The sequence is that of Insulin receptor substrate 1 (IRS1) from Homo sapiens (Human).